The primary structure comprises 253 residues: Imidazole glycerol phosphate synthase subunit HisF (253 aa).

Active-site residues include D13 and D132.

The protein belongs to the HisA/HisF family. Heterodimer of HisH and HisF.

It is found in the cytoplasm. It carries out the reaction 5-[(5-phospho-1-deoxy-D-ribulos-1-ylimino)methylamino]-1-(5-phospho-beta-D-ribosyl)imidazole-4-carboxamide + L-glutamine = D-erythro-1-(imidazol-4-yl)glycerol 3-phosphate + 5-amino-1-(5-phospho-beta-D-ribosyl)imidazole-4-carboxamide + L-glutamate + H(+). It functions in the pathway amino-acid biosynthesis; L-histidine biosynthesis; L-histidine from 5-phospho-alpha-D-ribose 1-diphosphate: step 5/9. In terms of biological role, IGPS catalyzes the conversion of PRFAR and glutamine to IGP, AICAR and glutamate. The HisF subunit catalyzes the cyclization activity that produces IGP and AICAR from PRFAR using the ammonia provided by the HisH subunit. This Aliarcobacter butzleri (strain RM4018) (Arcobacter butzleri) protein is Imidazole glycerol phosphate synthase subunit HisF.